The sequence spans 506 residues: 2-isopropylmalate synthase (506 aa).

The region spanning 4 to 266 (ILFMDTTLRD…EPSMTLKEIK (263 aa)) is the Pyruvate carboxyltransferase domain. The Mn(2+) site is built by Asp-13, His-201, His-203, and Asn-237. A regulatory domain region spans residues 390–506 (NITQLQVHFV…KLKSFIQLVK (117 aa)).

This sequence belongs to the alpha-IPM synthase/homocitrate synthase family. LeuA type 1 subfamily. Homodimer. It depends on Mn(2+) as a cofactor.

Its subcellular location is the cytoplasm. It catalyses the reaction 3-methyl-2-oxobutanoate + acetyl-CoA + H2O = (2S)-2-isopropylmalate + CoA + H(+). It participates in amino-acid biosynthesis; L-leucine biosynthesis; L-leucine from 3-methyl-2-oxobutanoate: step 1/4. Its function is as follows. Catalyzes the condensation of the acetyl group of acetyl-CoA with 3-methyl-2-oxobutanoate (2-ketoisovalerate) to form 3-carboxy-3-hydroxy-4-methylpentanoate (2-isopropylmalate). The sequence is that of 2-isopropylmalate synthase from Bacillus cereus (strain AH820).